We begin with the raw amino-acid sequence, 70 residues long: U2-agatoxin-Ao1l (70 aa).

Positions 1-20 (MRAIISLLLISAMVFSIIEA) are cleaved as a signal peptide. The propeptide occupies 21 to 34 (VPEEEGLQLSEDER). Intrachain disulfides connect C37–C53, C44–C58, and C52–C68. L69 carries the post-translational modification Leucine amide.

It belongs to the neurotoxin 01 (U2-agtx) family. Expressed by the venom gland.

It localises to the secreted. Its function is as follows. Insect active toxin causing rapid but reversible paralysis in crickets. No activity shown in mammals. Does not show effect on mammalian voltage-gated calcium channels. This is U2-agatoxin-Ao1l from Agelena orientalis (Funnel-web spider).